The following is a 964-amino-acid chain: Glycine dehydrogenase (decarboxylating) (964 aa).

Residues 1–10 (MNSTLQNRNR) show a composition bias toward polar residues. The disordered stretch occupies residues 1–25 (MNSTLQNRNRTNLERVSTDPLDTFP). Position 713 is an N6-(pyridoxal phosphate)lysine (lysine 713).

It belongs to the GcvP family. The glycine cleavage system is composed of four proteins: P, T, L and H. Requires pyridoxal 5'-phosphate as cofactor.

The enzyme catalyses N(6)-[(R)-lipoyl]-L-lysyl-[glycine-cleavage complex H protein] + glycine + H(+) = N(6)-[(R)-S(8)-aminomethyldihydrolipoyl]-L-lysyl-[glycine-cleavage complex H protein] + CO2. The glycine cleavage system catalyzes the degradation of glycine. The P protein binds the alpha-amino group of glycine through its pyridoxal phosphate cofactor; CO(2) is released and the remaining methylamine moiety is then transferred to the lipoamide cofactor of the H protein. This Leptospira borgpetersenii serovar Hardjo-bovis (strain JB197) protein is Glycine dehydrogenase (decarboxylating).